We begin with the raw amino-acid sequence, 463 residues long: ATP sulfurylase 1, chloroplastic (463 aa).

The transit peptide at 1–48 directs the protein to the chloroplast; the sequence is MASMAAVLSKTPFLSQPLTKSSPNSDLPFAAVSFPSKSLRRRVGSIRA.

Belongs to the sulfate adenylyltransferase family. Homotetramer.

It localises to the plastid. The protein resides in the chloroplast stroma. The enzyme catalyses sulfate + ATP + H(+) = adenosine 5'-phosphosulfate + diphosphate. It functions in the pathway sulfur metabolism; hydrogen sulfide biosynthesis; sulfite from sulfate: step 1/3. In terms of biological role, mediates selenate (Se) reduction, and promotes Se and sulfur (S) uptake and assimilation. This chain is ATP sulfurylase 1, chloroplastic (APS1), found in Arabidopsis thaliana (Mouse-ear cress).